The chain runs to 241 residues: 1-(5-phosphoribosyl)-5-[(5-phosphoribosylamino)methylideneamino] imidazole-4-carboxamide isomerase (241 aa).

The active-site Proton acceptor is Asp10. Asp131 functions as the Proton donor in the catalytic mechanism.

This sequence belongs to the HisA/HisF family.

It is found in the cytoplasm. It carries out the reaction 1-(5-phospho-beta-D-ribosyl)-5-[(5-phospho-beta-D-ribosylamino)methylideneamino]imidazole-4-carboxamide = 5-[(5-phospho-1-deoxy-D-ribulos-1-ylimino)methylamino]-1-(5-phospho-beta-D-ribosyl)imidazole-4-carboxamide. It functions in the pathway amino-acid biosynthesis; L-histidine biosynthesis; L-histidine from 5-phospho-alpha-D-ribose 1-diphosphate: step 4/9. This Bifidobacterium adolescentis (strain ATCC 15703 / DSM 20083 / NCTC 11814 / E194a) protein is 1-(5-phosphoribosyl)-5-[(5-phosphoribosylamino)methylideneamino] imidazole-4-carboxamide isomerase.